The following is a 299-amino-acid chain: Ribosomal RNA small subunit methyltransferase H (299 aa).

S-adenosyl-L-methionine-binding positions include 24–26, Asp43, Phe68, Asp90, and Gln97; that span reads GGH.

Belongs to the methyltransferase superfamily. RsmH family.

The protein localises to the cytoplasm. It catalyses the reaction cytidine(1402) in 16S rRNA + S-adenosyl-L-methionine = N(4)-methylcytidine(1402) in 16S rRNA + S-adenosyl-L-homocysteine + H(+). Functionally, specifically methylates the N4 position of cytidine in position 1402 (C1402) of 16S rRNA. This chain is Ribosomal RNA small subunit methyltransferase H, found in Francisella tularensis subsp. tularensis (strain WY96-3418).